The chain runs to 190 residues: Ribosome maturation factor RimP (190 aa).

The tract at residues 159–190 (ELELAGGIPEGRVAPADADASEDEEVVEGLDK) is disordered. A compositionally biased stretch (acidic residues) spans 177 to 190 (DASEDEEVVEGLDK).

This sequence belongs to the RimP family.

The protein resides in the cytoplasm. Its function is as follows. Required for maturation of 30S ribosomal subunits. The sequence is that of Ribosome maturation factor RimP from Rhodococcus opacus (strain B4).